Here is a 306-residue protein sequence, read N- to C-terminus: D-alanine--D-alanine ligase (306 aa).

Positions 101–303 (KQVWQAVGLP…FSQLVVKILE (203 aa)) constitute an ATP-grasp domain. Residue 134–189 (FTHLGLPLIVKPSREGSSVGMSKVNTLSELPAALEEAFRHDDDILVEKWLSGPEYT) coordinates ATP. The Mg(2+) site is built by D257, E270, and N272.

It belongs to the D-alanine--D-alanine ligase family. It depends on Mg(2+) as a cofactor. Mn(2+) serves as cofactor.

The protein localises to the cytoplasm. The catalysed reaction is 2 D-alanine + ATP = D-alanyl-D-alanine + ADP + phosphate + H(+). It participates in cell wall biogenesis; peptidoglycan biosynthesis. Cell wall formation. The protein is D-alanine--D-alanine ligase of Pectobacterium carotovorum subsp. carotovorum (strain PC1).